The primary structure comprises 240 residues: Probable transcriptional regulator ycf27 (240 aa).

In terms of domain architecture, Response regulatory spans 5-118 (KILVIDDEAS…ELEARIRSVL (114 aa)). D54 bears the 4-aspartylphosphate mark. A DNA-binding region (H-T-H motif) is located at residues 74–92 (DVPIIMLTALSDVSDRITG). Residues 133-234 (SGIINIGFLK…ARGTGYLFQR (102 aa)) constitute a DNA-binding region (ompR/PhoB-type).

The protein localises to the plastid. It is found in the chloroplast. Probable promoter-specific protein mediating the interaction between DNA and RNA polymerase. This is Probable transcriptional regulator ycf27 (ycf27) from Porphyridium aerugineum (Red microalga).